A 418-amino-acid polypeptide reads, in one-letter code: Tektin-1 (418 aa).

4 coiled-coil regions span residues 20–107, 134–177, 266–308, and 332–383; these read NKSQ…SYKE, QELQ…DLRD, NGLK…QQEG, and IAQY…ENTI.

The protein belongs to the tektin family. In terms of assembly, microtubule inner protein component of sperm flagellar doublet microtubules. In terms of processing, ubiquitinated, leading to its degradation. Deubiquitinated by USP16, promoting its stability.

It is found in the cytoplasm. It localises to the cytoskeleton. Its subcellular location is the cilium axoneme. The protein localises to the flagellum axoneme. In terms of biological role, microtubule inner protein (MIP) part of the dynein-decorated doublet microtubules (DMTs) in cilia and flagellar axoneme. Forms filamentous polymers in the walls of ciliary and flagellar microtubules. The sequence is that of Tektin-1 (Tekt1) from Mus musculus (Mouse).